The chain runs to 177 residues: ATP-dependent protease subunit HslV (177 aa).

The active site involves T7. 3 residues coordinate Na(+): G162, C165, and T168.

This sequence belongs to the peptidase T1B family. HslV subfamily. A double ring-shaped homohexamer of HslV is capped on each side by a ring-shaped HslU homohexamer. The assembly of the HslU/HslV complex is dependent on binding of ATP.

Its subcellular location is the cytoplasm. It catalyses the reaction ATP-dependent cleavage of peptide bonds with broad specificity.. Its activity is regulated as follows. Allosterically activated by HslU binding. Functionally, protease subunit of a proteasome-like degradation complex believed to be a general protein degrading machinery. The polypeptide is ATP-dependent protease subunit HslV (Persephonella marina (strain DSM 14350 / EX-H1)).